The following is a 310-amino-acid chain: MRRLIPILLGSLVLSLSILVAPAASWAYPFWAQQNYDNPREATGKIVCANCHLAQKTTQAEVPQSVLPDSVFKAVVKIPYKKDTTEISSDGSDVPLQVGAVVMLPDGFKLAPQDRWSEEIKEETKGVFFTQYSEEKENILLVGPLPGDNNKEIVFPILSPDPATDSSIQFGKYSIHVGGNRGRGQILPTGEKTNNNAFTATEAGTITSIKAGKNGESDIKLKTDSGKVISETIPAGPTLLVKVDDKVEAGAPLTSDPNSGGFGQLDTEVVLQNPVRIYGLLAFFVAVSLAQILLVLKKKQVEKVQAAEGI.

Residues 1–23 form the signal peptide; it reads MRRLIPILLGSLVLSLSILVAPA. Heme contacts are provided by Y28, C48, C51, and H52. A helical transmembrane segment spans residues 277-297; sequence IYGLLAFFVAVSLAQILLVLK.

It belongs to the cytochrome f family. The 4 large subunits of the cytochrome b6-f complex are cytochrome b6, subunit IV (17 kDa polypeptide, PetD), cytochrome f and the Rieske protein, while the 4 small subunits are PetG, PetL, PetM and PetN. The complex functions as a dimer. Heme is required as a cofactor.

The protein localises to the cellular thylakoid membrane. In terms of biological role, component of the cytochrome b6-f complex, which mediates electron transfer between photosystem II (PSII) and photosystem I (PSI), cyclic electron flow around PSI, and state transitions. In Prochlorococcus marinus (strain MIT 9303), this protein is Cytochrome f.